The following is a 319-amino-acid chain: Taste receptor type 2 member 14 (319 aa).

Over 1-7 (MDGVIKS) the chain is Extracellular. A helical membrane pass occupies residues 8-28 (IFTFILILEFIIGNLGNSFIV). At 29–55 (LVNCIDWVKRRKISLVDQLLIALAISR) the chain is on the cytoplasmic side. A helical membrane pass occupies residues 56–76 (ISLVWSIFGSWCVSVVFPALF). Topologically, residues 77–87 (ATEKLLRMLTN) are extracellular. Residues Thr86 and Trp89 each coordinate cholesterol. The helical transmembrane segment at 88–108 (IWTVTNHFSVWLATILGTFYF) threads the bilayer. Residues 109 to 129 (LKIANFSNSIFLYLKWRVKKV) are Cytoplasmic-facing. The chain crosses the membrane as a helical span at residues 130–150 (VLVLLLVTLVLLFLNILLINI). Residues 151 to 184 (HINASINGYRGNMTCSSASCNFIRFSSAIALTST) are Extracellular-facing. Residues Asn153 and Asn162 are each glycosylated (N-linked (GlcNAc...) asparagine). Ala180 contributes to the cholesterol binding site. The chain crosses the membrane as a helical span at residues 185–205 (VFILIPFTLSLATFLLLSFSL). Over 206–232 (WKHRKKMQHTVKGYRDVSTKAHRGVMQ) the chain is Cytoplasmic. The helical transmembrane segment at 233–253 (TVITFLLLYAVFFLTFFVSIW) threads the bilayer. Residues 254 to 261 (ISERLKEN) lie on the Extracellular side of the membrane. Residues 262–282 (QIIILSEMMGLAYPSGHSCVL) traverse the membrane as a helical segment. The cholesterol site is built by Ile265 and Glu268. Over 283 to 317 (ILGNKKLRQASLSVLWWLRYRFKDGELSGHKEFRE) the chain is Cytoplasmic.

Belongs to the G-protein coupled receptor T2R family. As to quaternary structure, core component of the TAS2R14-GNAI1 complex, consisting of TAS2R14, GNAI1, GNB1 and GNG2; within the complex interacts with GNAI1. Core component of the TAS2R14-GNAT3 complex, consisting of TAS2R14, GNAT3, GNB1 and GNG2; within the complex interacts with GNAT3. Core component of the TAS2R14-GNAS2 complex, consisting of TAS2R14, GNAS2, GNB1 and GNG2; within the complex interacts with GNAS2.

It localises to the membrane. It catalyses the reaction Ca(2+)(in) = Ca(2+)(out). The enzyme catalyses 3',5'-cyclic AMP(in) = 3',5'-cyclic AMP(out). Its activity is regulated as follows. Basal activity is enhanced by binding to bitter tastants, such as flufenamic acid and aristolochic acid. Regulated by cholesterol in a concentration-dependent manner. Gustducin-linked G-protein coupled receptor that plays a role in the perception of bitterness. The activity of this receptor stimulates GNAT3, activating the gustducin G-protein pathway. Likely plays a role in sensing the chemical composition of the gastrointestinal content and other extra-oral tissues via the inhibitory G-protein pathways. This is Taste receptor type 2 member 14 (TAS2R14) from Papio hamadryas (Hamadryas baboon).